The primary structure comprises 66 residues: UPF0457 protein BA_2525/GBAA_2525/BAS2348 (66 aa).

Belongs to the UPF0457 family.

The chain is UPF0457 protein BA_2525/GBAA_2525/BAS2348 from Bacillus anthracis.